The following is a 60-amino-acid chain: Large ribosomal subunit protein bL32 (60 aa).

Belongs to the bacterial ribosomal protein bL32 family.

The protein is Large ribosomal subunit protein bL32 of Geobacter sulfurreducens (strain ATCC 51573 / DSM 12127 / PCA).